The sequence spans 449 residues: Glutamyl-tRNA reductase (449 aa).

Substrate-binding positions include 49-52, serine 107, 112-114, and glutamine 118; these read TCNR and EPQ. Residue cysteine 50 is the Nucleophile of the active site. 187-192 provides a ligand contact to NADP(+); sequence GAGETI. The tract at residues 418-449 is disordered; the sequence is QLVERSSEGDDSQQAGADGGAARGDRRAAGGS. Positions 440-449 are enriched in basic and acidic residues; it reads RGDRRAAGGS.

It belongs to the glutamyl-tRNA reductase family. In terms of assembly, homodimer.

It carries out the reaction (S)-4-amino-5-oxopentanoate + tRNA(Glu) + NADP(+) = L-glutamyl-tRNA(Glu) + NADPH + H(+). Its pathway is porphyrin-containing compound metabolism; protoporphyrin-IX biosynthesis; 5-aminolevulinate from L-glutamyl-tRNA(Glu): step 1/2. Functionally, catalyzes the NADPH-dependent reduction of glutamyl-tRNA(Glu) to glutamate 1-semialdehyde (GSA). The polypeptide is Glutamyl-tRNA reductase (Halorhodospira halophila (strain DSM 244 / SL1) (Ectothiorhodospira halophila (strain DSM 244 / SL1))).